The primary structure comprises 142 residues: Hemoglobin F-I (142 aa).

Positions 2 to 142 constitute a Globin domain; that stretch reads GLTTAQIKAI…AAGVLVAAMK (141 aa). Position 95 (histidine 95) interacts with heme b.

It belongs to the globin family. Homotetramer.

In terms of biological role, hemoglobin F-I appears to function in storage, rather than transport of oxygen. The polypeptide is Hemoglobin F-I (Urechis caupo (Innkeeper worm)).